A 453-amino-acid chain; its full sequence is MERSSLAVILAAGDSTRMKSSKSKVLHPVAGRPMIGHVVEAVAGAGVGAVALVVGRDADNVAAAASLKGLQVEAFLQKERKGTGHAVLAAREAIKRGFDDVIVAYGDVPLITSATLDRAREAIAAGADVAVIGFHTDRPTGYGRLLVENGELVAIREEKDATDEERKVTWCNSGLMAINGRNALDLLDRIGNSNVKGEYYLTDVVEIARSLGRRAIAIDAPEKELTGCNNRAELAFIERLWQERRRHELMVDGVSMIAPETVFLSFDTKIGQDVLIEPNVVFGPGVTIEPGAIVHAFSHLEGAHLAEGAVVGPFARLRPGANLHANAKVGNFCEVKKAEIGEGAKVNHLTYIGDAFVGAGSNIGAGAITCNYDGYNKSETRIGANSFIGSNSSLVAPVTIGERAYIASGSVITDDVPADALAFGRARQEVKPGRAVALRERAKAQKEAKKKSS.

The interval 1 to 231 (MERSSLAVIL…EKELTGCNNR (231 aa)) is pyrophosphorylase. Residues 10–13 (LAAG), Lys24, Gln77, 82–83 (GT), 105–107 (YGD), Gly143, Glu157, Asn172, and Asn229 each bind UDP-N-acetyl-alpha-D-glucosamine. Asp107 lines the Mg(2+) pocket. Asn229 contributes to the Mg(2+) binding site. The interval 232-252 (AELAFIERLWQERRRHELMVD) is linker. The segment at 253-453 (GVSMIAPETV…AQKEAKKKSS (201 aa)) is N-acetyltransferase. Residues Arg318 and Lys336 each contribute to the UDP-N-acetyl-alpha-D-glucosamine site. The Proton acceptor role is filled by His348. The UDP-N-acetyl-alpha-D-glucosamine site is built by Tyr351 and Asn362. Residues Ala365, 371 to 372 (NY), Ser390, Ser408, and Arg425 each bind acetyl-CoA.

In the N-terminal section; belongs to the N-acetylglucosamine-1-phosphate uridyltransferase family. The protein in the C-terminal section; belongs to the transferase hexapeptide repeat family. As to quaternary structure, homotrimer. Mg(2+) serves as cofactor.

The protein localises to the cytoplasm. The catalysed reaction is alpha-D-glucosamine 1-phosphate + acetyl-CoA = N-acetyl-alpha-D-glucosamine 1-phosphate + CoA + H(+). It catalyses the reaction N-acetyl-alpha-D-glucosamine 1-phosphate + UTP + H(+) = UDP-N-acetyl-alpha-D-glucosamine + diphosphate. It functions in the pathway nucleotide-sugar biosynthesis; UDP-N-acetyl-alpha-D-glucosamine biosynthesis; N-acetyl-alpha-D-glucosamine 1-phosphate from alpha-D-glucosamine 6-phosphate (route II): step 2/2. It participates in nucleotide-sugar biosynthesis; UDP-N-acetyl-alpha-D-glucosamine biosynthesis; UDP-N-acetyl-alpha-D-glucosamine from N-acetyl-alpha-D-glucosamine 1-phosphate: step 1/1. The protein operates within bacterial outer membrane biogenesis; LPS lipid A biosynthesis. Its function is as follows. Catalyzes the last two sequential reactions in the de novo biosynthetic pathway for UDP-N-acetylglucosamine (UDP-GlcNAc). The C-terminal domain catalyzes the transfer of acetyl group from acetyl coenzyme A to glucosamine-1-phosphate (GlcN-1-P) to produce N-acetylglucosamine-1-phosphate (GlcNAc-1-P), which is converted into UDP-GlcNAc by the transfer of uridine 5-monophosphate (from uridine 5-triphosphate), a reaction catalyzed by the N-terminal domain. The protein is Bifunctional protein GlmU of Agrobacterium fabrum (strain C58 / ATCC 33970) (Agrobacterium tumefaciens (strain C58)).